We begin with the raw amino-acid sequence, 487 residues long: ATP synthase subunit beta (487 aa).

ATP is bound at residue 171–178; the sequence is GGAGVGKT.

It belongs to the ATPase alpha/beta chains family. As to quaternary structure, F-type ATPases have 2 components, CF(1) - the catalytic core - and CF(0) - the membrane proton channel. CF(1) has five subunits: alpha(3), beta(3), gamma(1), delta(1), epsilon(1). CF(0) has three main subunits: a(1), b(2) and c(9-12). The alpha and beta chains form an alternating ring which encloses part of the gamma chain. CF(1) is attached to CF(0) by a central stalk formed by the gamma and epsilon chains, while a peripheral stalk is formed by the delta and b chains.

Its subcellular location is the cell membrane. The enzyme catalyses ATP + H2O + 4 H(+)(in) = ADP + phosphate + 5 H(+)(out). Functionally, produces ATP from ADP in the presence of a proton gradient across the membrane. The catalytic sites are hosted primarily by the beta subunits. This chain is ATP synthase subunit beta, found in Leifsonia xyli subsp. xyli (strain CTCB07).